Reading from the N-terminus, the 892-residue chain is MDHYDSQQTNDYMQPEEDWDRDLLLDPAWEKQQRKTFTAWCNSHLRKAGTQIENIEEDFRDGLKLMLLLEVISGERLAKPERGKMRVHKISNVNKALDFIASKGVKLVSIGAEEIVDGNVKMTLGMIWTIILRFAIQDISVEETSAKEGLLLWCQRKTAPYKNVNIQNFHISWKDGLGFCALIHRHRPELIDYGKLRKDDPLTNLNTAFDVAEKYLDIPKMLDAEDIVGTARPDEKAIMTYVSSFYHAFSGAQKAETAANRICKVLAVNQENEQLMEDYEKLASDLLEWIRRTIPWLENRVPENTMHAMQQKLEDFRDYRRLHKPPKVQEKCQLEINFNTLQTKLRLSNRPAFMPSEGRMVSDINNAWGCLEQVEKGYEEWLLNEIRRLERLDHLAEKFRQKASIHEAWTDGKEAMLRQKDYETATLSEIKALLKKHEAFESDLAAHQDRVEQIAAIAQELNELDYYDSPSVNARCQKICDQWDNLGALTQKRREALERTEKLLETIDQLYLEYAKRAAPFNNWMEGAMEDLQDTFIVHTIEEIQGLTTAHEQFKATLPDADKERLAILGIHNEVSKIVQTYHVNMAGTNPYTTITPQEINGKWDHVRQLVPRRDQALTEEHARQQHNERLRKQFGAQANVIGPWIQTKMEEIGRISIEMHGTLEDQLSHLRQYEKSIVNYKPKIDQLEGDHQLIQEALIFDNKHTNYTMEHIRVGWEQLLTTIARTINEVENQILTRDAKGISQEQMNEFRASFNHFDRDHSGTLGPEEFKACLISLGYDIGNDPQGEAEFARIMSIVDPNRLGVVTFQAFIDFMSRETADTDTADQVMASFKILAGDKNYITVDELRRELPPDQAEYCIARMAPYTGPDSVPGALDYMSFSTALYGESDL.

Residue methionine 1 is modified to N-acetylmethionine. The segment at methionine 1 to histidine 247 is actin-binding. Position 6 is a phosphoserine (serine 6). Phosphotyrosine; by FAK1 is present on tyrosine 12. Calponin-homology (CH) domains follow at residues lysine 31 to alanine 135 and threonine 144 to serine 250. N6-acetyllysine occurs at positions 95 and 195. Spectrin repeat units follow at residues glutamine 274–asparagine 384, histidine 394–arginine 499, glutamine 509–glutamate 620, and arginine 630–asparagine 733. The interaction with DDN stretch occupies residues glutamine 274 to asparagine 733. Phosphoserine is present on serine 471. An N6-acetyllysine modification is found at lysine 676. Residue serine 677 is modified to Phosphoserine. EF-hand domains follow at residues glutamate 746 to aspartate 781 and glutamine 787 to aspartate 822. The Ca(2+) site is built by aspartate 759, aspartate 761, serine 763, threonine 765, and glutamate 770. A Phosphoserine modification is found at serine 890.

It belongs to the alpha-actinin family. As to quaternary structure, homodimer; antiparallel. Interacts with MYOZ2, TTID and LPP. Interacts with DDN. Interacts with PSD. Interacts with MICALL2. Interacts with DNM2 and CTTN. Interacts with PDLIM1. Interacts with PDLIM2. Interacts with PDLIM4 (via PDZ domain). Interacts with IGSF8.

It localises to the cytoplasm. It is found in the cytoskeleton. The protein resides in the myofibril. Its subcellular location is the sarcomere. The protein localises to the z line. It localises to the cell membrane. It is found in the cell junction. The protein resides in the cell projection. Its subcellular location is the ruffle. Its function is as follows. F-actin cross-linking protein which is thought to anchor actin to a variety of intracellular structures. Association with IGSF8 regulates the immune synapse formation and is required for efficient T-cell activation. The polypeptide is Alpha-actinin-1 (ACTN1) (Macaca fascicularis (Crab-eating macaque)).